Here is a 215-residue protein sequence, read N- to C-terminus: Cytochrome b6 (215 aa).

Residues 32–52 (IFYCLGGITLTCFLVQVATGF) traverse the membrane as a helical segment. Cys35 is a heme c binding site. Positions 86 and 100 each coordinate heme b. The next 3 membrane-spanning stretches (helical) occupy residues 90–110 (ASMMVLMMILHVFRVYLTGGF), 116–136 (LTWVTGVILAVLTASFGVTGY), and 186–206 (LHTFVLPLLTAVFMLMHFSMI). The heme b site is built by His187 and His202.

The protein belongs to the cytochrome b family. PetB subfamily. The 4 large subunits of the cytochrome b6-f complex are cytochrome b6, subunit IV (17 kDa polypeptide, PetD), cytochrome f and the Rieske protein, while the 4 small subunits are PetG, PetL, PetM and PetN. The complex functions as a dimer. Requires heme b as cofactor. Heme c is required as a cofactor.

It is found in the plastid. Its subcellular location is the chloroplast thylakoid membrane. Component of the cytochrome b6-f complex, which mediates electron transfer between photosystem II (PSII) and photosystem I (PSI), cyclic electron flow around PSI, and state transitions. The polypeptide is Cytochrome b6 (Piper cenocladum (Ant piper)).